A 24-amino-acid chain; its full sequence is Osteocalcin (24 aa).

The Gla domain maps to 1-24; the sequence is REVCELNPDCDELADHIGFQEAYR. Ca(2+) is bound by residues E2, E5, and D11. 4-carboxyglutamate is present on residues E2 and E5. C4 and C10 are disulfide-bonded.

The protein belongs to the osteocalcin/matrix Gla protein family. Gamma-carboxyglutamate residues are formed by vitamin K dependent carboxylation by GGCX. These residues are essential for the binding of calcium. Decarboxylation promotes the hormone activity.

The protein localises to the secreted. Its function is as follows. The carboxylated form is one of the main organic components of the bone matrix, which constitutes 1-2% of the total bone protein: it acts as a negative regulator of bone formation and is required to limit bone formation without impairing bone resorption or mineralization. The carboxylated form binds strongly to apatite and calcium. Functionally, the uncarboxylated form acts as a hormone secreted by osteoblasts, which regulates different cellular processes, such as energy metabolism, male fertility and brain development. Regulates of energy metabolism by acting as a hormone favoring pancreatic beta-cell proliferation, insulin secretion and sensitivity and energy expenditure. Uncarboxylated osteocalcin hormone also promotes testosterone production in the testes: acts as a ligand for G protein-coupled receptor GPRC6A at the surface of Leydig cells, initiating a signaling response that promotes the expression of enzymes required for testosterone synthesis in a CREB-dependent manner. Also acts as a regulator of brain development: osteocalcin hormone crosses the blood-brain barrier and acts as a ligand for GPR158 on neurons, initiating a signaling response that prevents neuronal apoptosis in the hippocampus, favors the synthesis of all monoamine neurotransmitters and inhibits that of gamma-aminobutyric acid (GABA). Osteocalcin also crosses the placenta during pregnancy and maternal osteocalcin is required for fetal brain development. This chain is Osteocalcin, found in Homo sapiens neanderthalensis (Neanderthal).